Consider the following 302-residue polypeptide: Protein FLOURY 1 (302 aa).

Transmembrane regions (helical) follow at residues 27–47 (SAGA…VAVL) and 82–102 (LAGS…FLAV). Residues 160–195 (SSKPVSRSLAAEFDQEADGEEEDNAGETSDPDDGSV) are disordered. Acidic residues predominate over residues 172–192 (FDQEADGEEEDNAGETSDPDD). Residues 193-299 (GSVQYLRRRL…ALSETSEDDR (107 aa)) enclose the GTD-binding domain. Residues 199–254 (RRRLKEEMLLKEVALEELEKERHAAASAADEAMSKIACLRSEKALVEREARQFQEM) adopt a coiled-coil conformation. The segment at 283–302 (PEAITDRALSETSEDDRDKK) is disordered.

Interacts (via C-terminus) with both 22 kDa and 19 kDa alpha-zeins. Interacts (via C-terminus) with OP10 (via N-terminus). In terms of tissue distribution, expressed in endosperm. Not detected in embryo, leaves and roots.

It localises to the endoplasmic reticulum membrane. In terms of biological role, involved in protein body development and 22 kDa alpha-zein localization. The sequence is that of Protein FLOURY 1 from Zea mays (Maize).